The following is an 835-amino-acid chain: MNEATEAWPKFKVLFATDGDSAEIITDILTGTDTNAFIYSVLHNCYIYPTEVKIVLILCLPAKKPGGGDKCLEVFQLHIDTELAIPFLFYTKPLKANDLHKYIDFKAARKNFKPILDIISTNKPSPKTHNSDIKSKIVWFRAKFVNSLRKLYKISSSPYWMITTFGSFEVPFLLTAIFYFFEQHNCTINTIFHLSSLFEKKLGTSLIAITTFEELGGVCSTSDYLKTAPAFINYCHIKLARDSLESQAIDTSIDTLRGQLMLSNQDLVHYIYLSFFQCLNKDIFIKYSHLTNSDNIHFVPETEVLAQSLDENFRKDMLTYYNKSTYLKTYITHKCIHLPDLIGYAPQDCTSFVYWAGQSKNVHNLLNVINTTHPHINISEDLNGLLDLAAIDSTFNVDNLKDCVFNESQKVPVYRCEFLNKTYFVIVQNDILKNVWSTDVLMPMQENWYMLKDTEITSNISYKETFTSMLTLRDQLKISRHEYFNPRLPVFNLVLDLDLHIHTSEHEIDEIYNLCCTLRSLILETLQLLGPVDIDTHHVYFFKSTCEKPENWIDNKELKFCYCTKKLGFRIITPLPAGVVLLGSNPVISFVNILNRTIKIDKKLLAMYPLIMETDGPFDVGIYHKGRCVRIPHTYKVNSSGRLERLLKLFVCHPHVDNKLQYVMDSFDINNLLYHSHNPEKVKQLKAVYDIADTNENFILQKAQAQLPQTNHNAVERIESASHMSITDWVAEFAWPRLFELIKLYLSEEKVSQFYHVSFAASTGNIIKIISLSGNFSCLNFKHRLKTQSVRIFLSLHLTPDNCVTLTLMSQCFASKCNSNKCIAHMSVRVPITDK.

The CHC2-type zinc-finger motif lies at 778 to 817 (CLNFKHRLKTQSVRIFLSLHLTPDNCVTLTLMSQCFASKC).

It belongs to the herpesviridae DNA primase family. In terms of assembly, associates with the helicase and the primase-associated factor to form the helicase-primase factor.

It is found in the host nucleus. In terms of biological role, essential component of the helicase/primase complex. Unwinds the DNA at the replication forks and generates single-stranded DNA for both leading and lagging strand synthesis. The primase initiates primer synthesis and thereby produces large amount of short RNA primers on the lagging strand that the polymerase elongates using dNTPs. This Saimiri sciureus (Common squirrel monkey) protein is DNA primase (56).